A 101-amino-acid polypeptide reads, in one-letter code: Small ribosomal subunit protein uS14 (101 aa).

It belongs to the universal ribosomal protein uS14 family. In terms of assembly, part of the 30S ribosomal subunit. Contacts proteins S3 and S10.

Functionally, binds 16S rRNA, required for the assembly of 30S particles and may also be responsible for determining the conformation of the 16S rRNA at the A site. In Ehrlichia ruminantium (strain Welgevonden), this protein is Small ribosomal subunit protein uS14.